The chain runs to 366 residues: G kinase-anchoring protein 1 (366 aa).

Residues 1-95 are interaction with IRS1; that stretch reads MASAVLSSVP…SHAVCNAQHD (95 aa). 2 disordered regions span residues 20–110 and 147–177; these read QVDS…REEN and EYED…DRPL. Phosphoserine occurs at positions 23, 25, and 27. A compositionally biased stretch (polar residues) spans 39 to 50; that stretch reads TGKSQTLGSKST. Residues 47 to 77 adopt a coiled-coil conformation; the sequence is SKSTTNEKKREKRRKKKEQQQSEANELRNLA. Ser-106 carries the phosphoserine; by PKG modification. Coiled-coil stretches lie at residues 128 to 160 and 243 to 353; these read ADLE…QSKV and EHNQ…YQGG.

This sequence belongs to the GKAP1 family. Interacts with PRKG1 and IRS1.

It localises to the golgi apparatus. Its function is as follows. Regulates insulin-dependent IRS1 tyrosine phosphorylation in adipocytes by modulating the availability of IRS1 to IR tyrosine kinase. Its association with IRS1 is required for insulin-induced translocation of SLC2A4 to the cell membrane. Involved in TNF-induced impairment of insulin-dependent IRS1 tyrosine phosphorylation. This Homo sapiens (Human) protein is G kinase-anchoring protein 1 (GKAP1).